Reading from the N-terminus, the 232-residue chain is Ubiquinone biosynthesis O-methyltransferase (232 aa).

S-adenosyl-L-methionine contacts are provided by Arg36, Gly55, Asp76, and Met120.

This sequence belongs to the methyltransferase superfamily. UbiG/COQ3 family.

It carries out the reaction a 3-demethylubiquinol + S-adenosyl-L-methionine = a ubiquinol + S-adenosyl-L-homocysteine + H(+). The enzyme catalyses a 3-(all-trans-polyprenyl)benzene-1,2-diol + S-adenosyl-L-methionine = a 2-methoxy-6-(all-trans-polyprenyl)phenol + S-adenosyl-L-homocysteine + H(+). Its pathway is cofactor biosynthesis; ubiquinone biosynthesis. O-methyltransferase that catalyzes the 2 O-methylation steps in the ubiquinone biosynthetic pathway. The protein is Ubiquinone biosynthesis O-methyltransferase of Thiobacillus denitrificans (strain ATCC 25259 / T1).